Here is a 791-residue protein sequence, read N- to C-terminus: KN motif and ankyrin repeat domain-containing protein 3 (791 aa).

Disordered regions lie at residues 1–37 (MAKF…SVET), 56–181 (RGPA…GPAQ), 254–312 (ATSD…ETRE), 401–425 (GCTE…GDEM), and 463–514 (YESS…GDCE). A compositionally biased stretch (polar residues) spans 25–34 (SARSPSSPYS). The span at 105–125 (LSPGAFPGLSLPPLSPRSLSR) shows a compositional bias: low complexity. Residues 127-149 (PRVEHTLLETSRRLEQAQARERA) are compositionally biased toward basic and acidic residues. Phosphoserine occurs at positions 151, 159, 163, 166, 167, and 176. Low complexity predominate over residues 158 to 180 (RSPRGSGRSSPAPNPALASPGPA). Residues 180–229 (AQLQLVREQMAAALRRLRELEDQARALPELQEQVRALRAEKARLLAGRVQ) are a coiled coil. Composition is skewed to basic and acidic residues over residues 254–280 (ATSD…RRSE) and 293–312 (PDGE…ETRE). Position 279 is a phosphoserine (Ser-279). Residues 401–410 (GCTEKTTQTE) show a composition bias toward polar residues. The span at 485–496 (SSSSGSDDSSGG) shows a compositional bias: low complexity. Over residues 505 to 514 (HNDKDAGDCE) the composition is skewed to basic and acidic residues. 5 ANK repeats span residues 606-636 (NGNT…DVNH), 640-677 (AGYS…AKAS), 679-708 (TGQT…DVNV), 712-742 (DGAT…DLTI), and 746-775 (EGTS…SNHQ). The span at 772–783 (SNHQGQSSTGSP) shows a compositional bias: polar residues. Positions 772-791 (SNHQGQSSTGSPTAKECNDK) are disordered.

Functionally, may be involved in the control of cytoskeleton formation by regulating actin polymerization. In Mus musculus (Mouse), this protein is KN motif and ankyrin repeat domain-containing protein 3.